Reading from the N-terminus, the 311-residue chain is Probable inactive peptidyl-prolyl cis-trans isomerase-like 6 (311 aa).

One can recognise a PPIase cyclophilin-type domain in the interval 145 to 308 (FLDICIDSSP…HMCRITDSGD (164 aa)).

It belongs to the cyclophilin-type PPIase family.

Functionally, probable inactive PPIase with no peptidyl-prolyl cis-trans isomerase activity. The protein is Probable inactive peptidyl-prolyl cis-trans isomerase-like 6 of Homo sapiens (Human).